The primary structure comprises 315 residues: Homoserine kinase (315 aa).

Residue 96-106 (PHSRGLGSSAA) participates in ATP binding.

Belongs to the GHMP kinase family. Homoserine kinase subfamily.

Its subcellular location is the cytoplasm. The enzyme catalyses L-homoserine + ATP = O-phospho-L-homoserine + ADP + H(+). It functions in the pathway amino-acid biosynthesis; L-threonine biosynthesis; L-threonine from L-aspartate: step 4/5. Its function is as follows. Catalyzes the ATP-dependent phosphorylation of L-homoserine to L-homoserine phosphate. In Mycobacterium leprae (strain Br4923), this protein is Homoserine kinase.